An 838-amino-acid polypeptide reads, in one-letter code: Probable inorganic carbon transporter subunit DabA (838 aa).

Zn(2+) contacts are provided by Cys353, Asp355, His537, and Cys552.

This sequence belongs to the inorganic carbon transporter (TC 9.A.2) DabA family. As to quaternary structure, forms a complex with DabB. It depends on Zn(2+) as a cofactor.

It is found in the cell membrane. Functionally, part of an energy-coupled inorganic carbon pump. The protein is Probable inorganic carbon transporter subunit DabA of Roseiflexus sp. (strain RS-1).